A 297-amino-acid polypeptide reads, in one-letter code: Non-structural protein VP10 (297 aa).

The polypeptide is Non-structural protein VP10 (Oryza latifolia (Indian wild rice)).